We begin with the raw amino-acid sequence, 283 residues long: uncharacterized protein (283 aa).

A run of 6 helical transmembrane segments spans residues 28–48 (LSSTSGAIGAIFGIILSILLI), 65–85 (LTSLIVASFGFLIALIIGFIL), 113–133 (LKRGFLYWIGNIILSIIFMIV), 135–155 (ILFIIFGVFLIFLPLVGIVFI), 200–220 (LNYIILLIIVGVIVIVINFVV), and 246–266 (IVDVISAVISAFVGFYTAVFA).

It to M.jannaschii MJ0233.

The protein resides in the cell membrane. This is an uncharacterized protein from Methanocaldococcus jannaschii (strain ATCC 43067 / DSM 2661 / JAL-1 / JCM 10045 / NBRC 100440) (Methanococcus jannaschii).